A 139-amino-acid chain; its full sequence is uncharacterized protein (139 aa).

The helical transmembrane segment at 22–38 threads the bilayer; sequence SVMSVCFMTMSATVLPI.

The protein resides in the membrane. This is an uncharacterized protein from Saccharomyces cerevisiae (strain ATCC 204508 / S288c) (Baker's yeast).